Consider the following 62-residue polypeptide: Photosystem II reaction center protein Z (62 aa).

2 helical membrane-spanning segments follow: residues 8-28 (AVFA…VVFA) and 41-61 (FSGT…NSLI).

The protein belongs to the PsbZ family. As to quaternary structure, PSII is composed of 1 copy each of membrane proteins PsbA, PsbB, PsbC, PsbD, PsbE, PsbF, PsbH, PsbI, PsbJ, PsbK, PsbL, PsbM, PsbT, PsbY, PsbZ, Psb30/Ycf12, at least 3 peripheral proteins of the oxygen-evolving complex and a large number of cofactors. It forms dimeric complexes.

The protein resides in the plastid. The protein localises to the chloroplast thylakoid membrane. In terms of biological role, may control the interaction of photosystem II (PSII) cores with the light-harvesting antenna, regulates electron flow through the 2 photosystem reaction centers. PSII is a light-driven water plastoquinone oxidoreductase, using light energy to abstract electrons from H(2)O, generating a proton gradient subsequently used for ATP formation. The protein is Photosystem II reaction center protein Z of Gossypium barbadense (Sea Island cotton).